Here is a 392-residue protein sequence, read N- to C-terminus: Putative cystathionine gamma-lyase (392 aa).

Positions 1–10 (MSDSATTDSA) are enriched in polar residues. The tract at residues 1–41 (MSDSATTDSAGTGGERSASAPGDGTRAVRAGLPEPVKHEPT) is disordered. N6-(pyridoxal phosphate)lysine is present on K216.

This sequence belongs to the trans-sulfuration enzymes family. Pyridoxal 5'-phosphate serves as cofactor.

It is found in the cytoplasm. It carries out the reaction L,L-cystathionine + H2O = 2-oxobutanoate + L-cysteine + NH4(+). Its pathway is amino-acid biosynthesis; L-cysteine biosynthesis; L-cysteine from L-homocysteine and L-serine: step 2/2. This is Putative cystathionine gamma-lyase (cysA) from Streptomyces coelicolor (strain ATCC BAA-471 / A3(2) / M145).